The sequence spans 102 residues: ATP-dependent Clp protease adapter protein ClpS (102 aa).

It belongs to the ClpS family. As to quaternary structure, binds to the N-terminal domain of the chaperone ClpA.

Involved in the modulation of the specificity of the ClpAP-mediated ATP-dependent protein degradation. The chain is ATP-dependent Clp protease adapter protein ClpS from Shewanella woodyi (strain ATCC 51908 / MS32).